We begin with the raw amino-acid sequence, 332 residues long: Adenosine deaminase (332 aa).

Zn(2+) is bound by residues His-12 and His-14. Residues His-14, Asp-16, and Gly-169 each contribute to the substrate site. His-196 is a binding site for Zn(2+). The active-site Proton donor is Glu-199. Asp-277 is a binding site for Zn(2+).

Belongs to the metallo-dependent hydrolases superfamily. Adenosine and AMP deaminases family. Adenosine deaminase subfamily. Zn(2+) serves as cofactor.

The catalysed reaction is adenosine + H2O + H(+) = inosine + NH4(+). It carries out the reaction 2'-deoxyadenosine + H2O + H(+) = 2'-deoxyinosine + NH4(+). Functionally, catalyzes the hydrolytic deamination of adenosine and 2-deoxyadenosine. The sequence is that of Adenosine deaminase from Vibrio atlanticus (strain LGP32) (Vibrio splendidus (strain Mel32)).